Reading from the N-terminus, the 254-residue chain is Dihydroorotate dehydrogenase B (NAD(+)), electron transfer subunit (254 aa).

The FAD-binding FR-type domain occupies 1-99; it reads MLQTEMKVIQ…LGPLGKGFDI (99 aa). Residues 50 to 53, 67 to 69, and 74 to 75 contribute to the FAD site; these read RPIS, LYR, and GT. Cysteine 218, cysteine 223, cysteine 226, and cysteine 241 together coordinate [2Fe-2S] cluster.

The protein belongs to the PyrK family. In terms of assembly, heterotetramer of 2 PyrK and 2 PyrD type B subunits. It depends on [2Fe-2S] cluster as a cofactor. FAD serves as cofactor.

It functions in the pathway pyrimidine metabolism; UMP biosynthesis via de novo pathway; orotate from (S)-dihydroorotate (NAD(+) route): step 1/1. Responsible for channeling the electrons from the oxidation of dihydroorotate from the FMN redox center in the PyrD type B subunit to the ultimate electron acceptor NAD(+). This chain is Dihydroorotate dehydrogenase B (NAD(+)), electron transfer subunit, found in Listeria welshimeri serovar 6b (strain ATCC 35897 / DSM 20650 / CCUG 15529 / CIP 8149 / NCTC 11857 / SLCC 5334 / V8).